A 332-amino-acid polypeptide reads, in one-letter code: Formamidase (332 aa).

The CN hydrolase domain occupies 14-259 (FLTALIQYPV…WEIVTAEVYP (246 aa)). E60 (proton acceptor) is an active-site residue. K132 functions as the Proton donor in the catalytic mechanism. The active-site Nucleophile is the C165.

This sequence belongs to the carbon-nitrogen hydrolase superfamily. Aliphatic amidase family.

The enzyme catalyses formamide + H2O = formate + NH4(+). Its function is as follows. Is an aliphatic amidase with a restricted substrate specificity, as it only hydrolyzes formamide. The chain is Formamidase from Bacillus cereus (strain ZK / E33L).